Reading from the N-terminus, the 147-residue chain is MNCFSYFFLVIILCAGLNNAKFNEKNSVIFKSSLGPKKLLRIHCTSEHDDTDYVYLRHGQTYAFSFHDSVLKTIFDCELKQGSSYYNYNFYARFRAYKGGGLIVHYGKKNFWDAREDGIYFTHGKETPKLEYKWIPGDPSMRVESPL.

Residues 1–20 form the signal peptide; that stretch reads MNCFSYFFLVIILCAGLNNA.

Belongs to the plant self-incompatibility (S1) protein family.

The protein localises to the secreted. This chain is S-protein homolog 10, found in Arabidopsis thaliana (Mouse-ear cress).